A 228-amino-acid chain; its full sequence is Prolactin-2A1 (228 aa).

Residues 1-28 (MQLSVTHPCCRTLILLLVSNLLLWESEA) form the signal peptide. Cystine bridges form between C87–C203 and C220–C228.

The protein belongs to the somatotropin/prolactin family. In terms of tissue distribution, expressed specifically in the placenta. Expression restricted to the junctional zone of the chorioallantoic placenta.

The protein localises to the secreted. The sequence is that of Prolactin-2A1 (Prl2a1) from Mus musculus (Mouse).